Consider the following 738-residue polypeptide: Alanine--tRNA ligase (738 aa).

Zn(2+)-binding residues include His564, His568, Cys666, and His670.

This sequence belongs to the class-II aminoacyl-tRNA synthetase family. In terms of assembly, homotetramer. Zn(2+) is required as a cofactor.

Its subcellular location is the cytoplasm. The catalysed reaction is tRNA(Ala) + L-alanine + ATP = L-alanyl-tRNA(Ala) + AMP + diphosphate. In terms of biological role, catalyzes the attachment of alanine to tRNA(Ala) in a two-step reaction: alanine is first activated by ATP to form Ala-AMP and then transferred to the acceptor end of tRNA(Ala). Also edits incorrectly charged Ser-tRNA(Ala) and Gly-tRNA(Ala) via its editing domain. In Yersinia pestis bv. Antiqua (strain Antiqua), this protein is Alanine--tRNA ligase (alaS).